The chain runs to 196 residues: Large ribosomal subunit protein bL25 (196 aa).

The protein belongs to the bacterial ribosomal protein bL25 family. CTC subfamily. As to quaternary structure, part of the 50S ribosomal subunit; part of the 5S rRNA/L5/L18/L25 subcomplex. Contacts the 5S rRNA. Binds to the 5S rRNA independently of L5 and L18.

In terms of biological role, this is one of the proteins that binds to the 5S RNA in the ribosome where it forms part of the central protuberance. The sequence is that of Large ribosomal subunit protein bL25 from Amoebophilus asiaticus (strain 5a2).